Reading from the N-terminus, the 43-residue chain is Protein PsbN (43 aa).

The helical transmembrane segment at 3 to 23 (IATLVAIFISGLLVSFTGYAL) threads the bilayer.

Belongs to the PsbN family.

The protein localises to the plastid. It is found in the chloroplast thylakoid membrane. May play a role in photosystem I and II biogenesis. This is Protein PsbN from Euonymus alatus (Burning bush).